The chain runs to 577 residues: Arginine--tRNA ligase (577 aa).

A 'HIGH' region motif is present at residues 122 to 132 (PNVAKEMHVGH).

The protein belongs to the class-I aminoacyl-tRNA synthetase family. As to quaternary structure, monomer.

It is found in the cytoplasm. The enzyme catalyses tRNA(Arg) + L-arginine + ATP = L-arginyl-tRNA(Arg) + AMP + diphosphate. The chain is Arginine--tRNA ligase from Escherichia coli O81 (strain ED1a).